Consider the following 124-residue polypeptide: Kalata-B1 (124 aa).

The signal sequence occupies residues Met-1 to Gly-22. A propeptide spanning residues Ser-23 to Lys-88 is cleaved from the precursor. Residues Gly-89–Asn-117 constitute a cross-link (cyclopeptide (Gly-Asn)). Disulfide bonds link Cys-93-Cys-107, Cys-97-Cys-109, and Cys-102-Cys-114. Residues Gly-118–Ala-124 constitute a propeptide that is removed on maturation.

It belongs to the cyclotide family. Moebius subfamily. Post-translationally, kalata-B1 is a cyclic peptide which occurs in three forms: with unmodified Trp-111, with Trp-111 oxidized to form oxindolylalanine and with Trp-111 oxidized to form N-formylkynurenine. Oxidation is enhanced by exposure to sunlight. As to expression, leaves and stems. Lower in roots.

In terms of biological role, probably participates in a plant defense mechanism. Has antibiotic activity. Has a diuretic effect. Has a uterotonic effect in humans. Active against the Gram-positive S.aureus with a minimum inhibition concentration of approximately 0.2 microM. Relatively ineffective against Gram-negative bacteria such as E.coli and P.aeruginosa. Inhibitory effect on the growth and development of larvae from H.punctigera. The unmodified form has hemolytic activity, the oxidized form lacks hemolytic activity. If the protein is linearized, hemolytic activity is lost. In Oldenlandia affinis, this protein is Kalata-B1 (OAK1).